The primary structure comprises 322 residues: Ig gamma-2A chain C region (322 aa).

3 consecutive Ig-like domains span residues 6 to 98 (PSVY…KKIV), 115 to 212 (VFIF…KSIS), and 221 to 317 (PQVY…KSLS). 3 disulfides stabilise this stretch: Cys27–Cys82, Cys136–Cys196, and Cys242–Cys300. A glycan (N-linked (GlcNAc...) asparagine) is linked at Asn172.

The polypeptide is Ig gamma-2A chain C region (Igg-2a) (Rattus norvegicus (Rat)).